An 898-amino-acid polypeptide reads, in one-letter code: Translation initiation factor IF-2 (898 aa).

The tract at residues 51 to 302 (KEHGDATGSE…RKGRINKPMS (252 aa)) is disordered. Composition is skewed to basic and acidic residues over residues 100 to 164 (SSVE…KRET) and 171 to 230 (RSDE…KETV). Residues 234 to 245 (QENTDYHVTTSR) show a composition bias toward polar residues. A compositionally biased stretch (basic residues) spans 263–273 (RRSTKANKRKM). Positions 274–286 (SSRDDNQERDSRP) are enriched in basic and acidic residues. Residues 287–297 (RGGKAGRKGRI) show a composition bias toward basic residues. Residues 397-566 (SRAPVVTIMG…LLQAEVLELK (170 aa)) form the tr-type G domain. The tract at residues 406–413 (GHVDHGKT) is G1. GTP is bound at residue 406–413 (GHVDHGKT). Residues 431 to 435 (GITQH) are G2. The tract at residues 452–455 (DTPG) is G3. Residues 452-456 (DTPGH) and 506-509 (NKID) contribute to the GTP site. Residues 506–509 (NKID) are G4. The G5 stretch occupies residues 542-544 (SAK).

It belongs to the TRAFAC class translation factor GTPase superfamily. Classic translation factor GTPase family. IF-2 subfamily.

Its subcellular location is the cytoplasm. Functionally, one of the essential components for the initiation of protein synthesis. Protects formylmethionyl-tRNA from spontaneous hydrolysis and promotes its binding to the 30S ribosomal subunits. Also involved in the hydrolysis of GTP during the formation of the 70S ribosomal complex. The sequence is that of Translation initiation factor IF-2 from Vibrio cholerae serotype O1 (strain ATCC 39541 / Classical Ogawa 395 / O395).